The sequence spans 242 residues: Sugar fermentation stimulation protein homolog (242 aa).

It belongs to the SfsA family.

This Rippkaea orientalis (strain PCC 8801 / RF-1) (Cyanothece sp. (strain PCC 8801)) protein is Sugar fermentation stimulation protein homolog.